The primary structure comprises 179 residues: MGITAGKSVLVLLAFLAFASCCYAAYRPSETLCGGELVDTLQFVCGDRGFYFSRPSSRINRRSRGIVEECCFRSCDLALLETYCATPAKSERDVSASTTVLPDDVTAYPVGKFFQYDIWKQSTQRLRRGLPAFLRARRGRTLAKELEALREAKSHRPLIALPTQDPATHGGASSKASSD.

An N-terminal signal peptide occupies residues 1–24; the sequence is MGITAGKSVLVLLAFLAFASCCYA. Residues 25-52 are b; that stretch reads AYRPSETLCGGELVDTLQFVCGDRGFYF. 3 cysteine pairs are disulfide-bonded: C33/C71, C45/C84, and C70/C75. The tract at residues 53-64 is c; that stretch reads SRPSSRINRRSR. An a region spans residues 65–85; sequence GIVEECCFRSCDLALLETYCA. A d region spans residues 86–91; that stretch reads TPAKSE. A propeptide spans 92 to 179 (e peptide); it reads RDVSASTTVL…GGASSKASSD (88 aa). A glycan (O-linked (GalNAc...) threonine) is linked at T106. An O-linked (GalNAc...) serine glycan is attached at S154. Positions 160–179 are disordered; that stretch reads ALPTQDPATHGGASSKASSD. O-linked (GalNAc...) threonine glycosylation is present at T163.

The protein belongs to the insulin family. As to quaternary structure, interacts with MYORG; this interaction is required for IGF2 secretion. Interacts with integrins ITGAV:ITGB3 and ITGA6:ITGB4; integrin-binding is required for IGF2 signaling. Interacts with IGFBP2. In terms of processing, proteolytically processed by PCSK4, proIGF2 is cleaved at Arg-128 and Arg-92 to generate big-IGF2 and mature IGF2.

The protein localises to the secreted. The insulin-like growth factors possess growth-promoting activity. Major fetal growth hormone in mammals. Plays a key role in regulating fetoplacental development. IGF2 is influenced by placental lactogen. Also involved in tissue differentiation. In adults, involved in glucose metabolism in adipose tissue, skeletal muscle and liver. Acts as a ligand for integrin which is required for IGF2 signaling. Positively regulates myogenic transcription factor MYOD1 function by facilitating the recruitment of transcriptional coactivators, thereby controlling muscle terminal differentiation. Inhibits myoblast differentiation and modulates metabolism via increasing the mitochondrial respiration rate. Its function is as follows. Preptin undergoes glucose-mediated co-secretion with insulin, and acts as a physiological amplifier of glucose-mediated insulin secretion. Exhibits osteogenic properties by increasing osteoblast mitogenic activity through phosphoactivation of MAPK1 and MAPK3. In Bos taurus (Bovine), this protein is Insulin-like growth factor 2.